The sequence spans 177 residues: Cytochrome c oxidase assembly protein CtaG (177 aa).

The Cytoplasmic segment spans residues 1–8 (MTQKAKNT). The helical; Signal-anchor for type II membrane protein transmembrane segment at 9–29 (IYLLILIILSMLCLVYASVPL) threads the bilayer. Residues 30–177 (YSIFCKVTGY…TFFKYKETTK (148 aa)) lie on the Periplasmic side of the membrane.

The protein belongs to the COX11/CtaG family.

Its subcellular location is the cell inner membrane. In terms of biological role, exerts its effect at some terminal stage of cytochrome c oxidase synthesis, probably by being involved in the insertion of the copper B into subunit I. This Ehrlichia ruminantium (strain Gardel) protein is Cytochrome c oxidase assembly protein CtaG.